A 188-amino-acid chain; its full sequence is Elongation factor P (188 aa).

Belongs to the elongation factor P family.

The protein localises to the cytoplasm. The protein operates within protein biosynthesis; polypeptide chain elongation. Its function is as follows. Involved in peptide bond synthesis. Stimulates efficient translation and peptide-bond synthesis on native or reconstituted 70S ribosomes in vitro. Probably functions indirectly by altering the affinity of the ribosome for aminoacyl-tRNA, thus increasing their reactivity as acceptors for peptidyl transferase. This is Elongation factor P from Phytoplasma mali (strain AT).